The primary structure comprises 55 residues: Large ribosomal subunit protein bL33 (55 aa).

The protein is methylated on either Ala-2 or Lys-3.

This is Large ribosomal subunit protein bL33 from Rhodopseudomonas palustris (strain ATCC BAA-98 / CGA009).